The primary structure comprises 301 residues: Glutamine amidotransferase-like protein GlxB (301 aa).

The active site involves cysteine 2. Residues 2–298 (CGIVGLFLKD…PATVYFWDHQ (297 aa)) form the Glutamine amidotransferase type-2 domain.

The sequence is that of Glutamine amidotransferase-like protein GlxB (glxB) from Rhizobium meliloti (strain 1021) (Ensifer meliloti).